Reading from the N-terminus, the 879-residue chain is Oxysterol-binding protein-related protein 5 (879 aa).

The interval 1-73 is disordered; it reads MKEEAFLRRR…TPSSATKVPP (73 aa). Ser-12 is subject to Phosphoserine. A coiled-coil region spans residues 93-123; the sequence is VTKKETLKAQKENYRQEKKRATRQLLSALTD. The 118-residue stretch at 126 to 243 folds into the PH domain; sequence VVIMADSLKI…WLDALELALR (118 aa). A disordered region spans residues 254-341; it reads KPGRDGEPGT…TPGAPVRRGT (88 aa). 2 stretches are compositionally biased toward basic and acidic residues: residues 300–309 and 316–325; these read FSDKSERENP and TQDHSRKTES. A 1,2-diacyl-sn-glycero-3-phospho-(1D-myo-inositol 4-phosphate)-binding positions include 384-389, 446-449, and 478-479; these read LSRVVL, KPYN, and HH. A 1,2-diacyl-sn-glycero-3-phospho-L-serine is bound by residues 384–389 and Asn-449; that span reads LSRVVL. Ser-504 contributes to the a 1,2-diacyl-sn-glycero-3-phospho-L-serine binding site. A 1,2-diacyl-sn-glycero-3-phospho-(1D-myo-inositol 4-phosphate)-binding residues include Lys-670, Glu-674, and Arg-678. The interval 742 to 806 is disordered; that stretch reads TTFLGSPGPR…FVPGGESPCP (65 aa). A Phosphoserine modification is found at Ser-747. Over residues 750 to 765 the composition is skewed to basic and acidic residues; the sequence is PRHERSGPDQRLRKAS. Over residues 766 to 783 the composition is skewed to polar residues; sequence DQPSGHSQATESSGSTPE. Residues 860 to 878 form a helical membrane-spanning segment; sequence SWFLLCVFLACQLFINHIL.

Belongs to the OSBP family. In terms of tissue distribution, ubiquitously expressed.

It localises to the endoplasmic reticulum membrane. Functionally, lipid transporter involved in lipid countertransport between the endoplasmic reticulum and the plasma membrane: specifically exchanges phosphatidylserine with phosphatidylinositol 4-phosphate (PI4P), delivering phosphatidylserine to the plasma membrane in exchange for PI4P, which is degraded by the SAC1/SACM1L phosphatase in the endoplasmic reticulum. Binds phosphatidylserine and PI4P in a mutually exclusive manner. May cooperate with NPC1 to mediate the exit of cholesterol from endosomes/lysosomes. Binds 25-hydroxycholesterol and cholesterol. This is Oxysterol-binding protein-related protein 5 (OSBPL5) from Homo sapiens (Human).